We begin with the raw amino-acid sequence, 294 residues long: tRNA pseudouridine synthase B (294 aa).

Residue Asp39 is the Nucleophile of the active site.

The protein belongs to the pseudouridine synthase TruB family. Type 1 subfamily.

The enzyme catalyses uridine(55) in tRNA = pseudouridine(55) in tRNA. Its function is as follows. Responsible for synthesis of pseudouridine from uracil-55 in the psi GC loop of transfer RNAs. The chain is tRNA pseudouridine synthase B from Streptococcus pyogenes serotype M28 (strain MGAS6180).